The sequence spans 374 residues: 4-galactosyl-N-acetylglucosaminide 3-alpha-L-fucosyltransferase FUT5 (374 aa).

The Cytoplasmic portion of the chain corresponds to 1–15 (MDPLGPAKPQWLWRR). Residues 16–34 (CLAGLLFQLLVAVCFFSYL) form a helical; Signal-anchor for type II membrane protein membrane-spanning segment. Over 35 to 374 (RVSRDDATGS…TVRSIAAWFT (340 aa)) the chain is Lumenal. N-linked (GlcNAc...) asparagine glycosylation is found at N60, N105, N167, and N198.

It belongs to the glycosyltransferase 10 family. Liver, colon and testis and trace amounts in T-cells and brain.

Its subcellular location is the golgi apparatus. The protein resides in the golgi stack membrane. The catalysed reaction is a beta-D-galactosyl-(1-&gt;3)-N-acetyl-beta-D-glucosaminyl derivative + GDP-beta-L-fucose = a beta-D-galactosyl-(1-&gt;3)-[alpha-L-fucosyl-(1-&gt;4)]-N-acetyl-beta-D-glucosaminyl derivative + GDP + H(+). It catalyses the reaction an N-acetyl-alpha-neuraminyl-(2-&gt;3)-beta-D-galactosyl-(1-&gt;4)-N-acetyl-beta-D-glucosaminyl derivative + GDP-beta-L-fucose = an alpha-Neu5Ac-(2-&gt;3)-beta-D-Gal-(1-&gt;4)-[alpha-L-Fuc-(1-&gt;3)]-beta-D-GlcNAc derivative + GDP + H(+). It carries out the reaction an alpha-Neu5Ac-(2-&gt;3)-beta-D-Gal-(1-&gt;4)-beta-D-GlcNAc-(1-&gt;3)-beta-D-Gal-(1-&gt;4)-[alpha-L-Fuc-(1-&gt;3)]-beta-D-GlcNAc derivative + GDP-beta-L-fucose = an alpha-Neu5Ac-(2-&gt;3)-beta-D-Gal-(1-&gt;4)-[alpha-L-Fuc-(1-&gt;3)]-beta-D-GlcNAc-(1-&gt;3)-beta-D-Gal-(1-&gt;4)-[alpha-L-Fuc-(1-&gt;3)]-beta-D-GlcNAc derivative + GDP + H(+). The enzyme catalyses a beta-D-galactosyl-(1-&gt;4)-N-acetyl-beta-D-glucosaminyl derivative + GDP-beta-L-fucose = a beta-D-galactosyl-(1-&gt;4)-[alpha-L-fucosyl-(1-&gt;3)]-N-acetyl-beta-D-glucosaminyl derivative + GDP + H(+). The catalysed reaction is a neolactoside nLc4Cer + GDP-beta-L-fucose = a neolactoside III(3)-alpha-Fuc-nLc4Cer + GDP + H(+). It catalyses the reaction a neolactoside nLc6Cer + GDP-beta-L-fucose = beta-D-galactosyl-(1-&gt;4)-N-acetyl-beta-D-glucosaminyl-(1-&gt;3)-beta-D-galactosyl-(1-&gt;4)-[alpha-L-fucosyl-(1-&gt;3)]-N-acetyl-beta-D-glucosaminyl-(1-&gt;3)-beta-D-galactosyl-(1-&gt;4)-beta-D-glucosyl-(1&lt;-&gt;1')-ceramide + GDP + H(+). It carries out the reaction a neolactoside nLc6Cer(d18:1(4E)) + GDP-beta-L-fucose = a neolactoside III(3)-alpha-Fuc-nLc6Cer(d18:1(4E)) + GDP + H(+). The enzyme catalyses a neolactoside nLc4Cer(d18:1(4E)) + GDP-beta-L-fucose = a neolactoside III(3)-alpha-Fuc-nLc4Cer(d18:1(4E)) + GDP + H(+). The catalysed reaction is a neolactoside VI(3)-alpha-NeuNAc-nLc6Cer + GDP-beta-L-fucose = a neolactoside VI(3)-alpha-NeuAc,III(3)-alphaFuc-nLc6Cer + GDP + H(+). It catalyses the reaction beta-D-galactosyl-(1-&gt;4)-N-acetyl-D-glucosamine + GDP-beta-L-fucose = beta-D-galactosyl-(1-&gt;4)-[alpha-L-fucosyl-(1-&gt;3)]-N-acetyl-D-glucosamine + GDP + H(+). It carries out the reaction N-acetyl-alpha-neuraminosyl-(2-&gt;3)-beta-D-galactosyl-(1-&gt;4)-N-acetyl-beta-D-glucosamine + GDP-beta-L-fucose = N-acetyl-alpha-neuraminosyl-(2-&gt;3)-beta-D-galactosyl-(1-&gt;4)-[alpha-L-fucosyl-(1-&gt;3)]-N-acetyl-beta-D-glucosamine + GDP + H(+). The enzyme catalyses alpha-L-Fuc-(1-&gt;2)-beta-D-Gal-(1-&gt;4)-D-GlcNAc + GDP-beta-L-fucose = alpha-L-Fuc-(1-&gt;2)-beta-D-Gal-(1-&gt;4)-[alpha-L-Fuc-(1-&gt;3)]-D-GlcNAc + GDP + H(+). The catalysed reaction is an alpha-Neu5Ac-(2-&gt;3)-beta-D-Gal-(1-&gt;3)-D-GlcNAc derivative + GDP-beta-L-fucose = an alpha-Neu5Ac-(2-&gt;3)-beta-D-Gal-(1-&gt;3)-[alpha-L-Fuc-(1-&gt;4)]-beta-D-GlcNAc derivative + GDP + H(+). The protein operates within protein modification; protein glycosylation. Catalyzes preferentially the transfer of L-fucose, from a guanosine diphosphate-beta-L-fucose, to the N-acetyl-beta-D-glucosamine (GlcNAc) of an N-acetyllactosamine unit (type 2 chain) of an oligosaccharide, or a glycoprotein- and a glycolipid-linked N-acetyllactosamine unit via an alpha (1,3) linkage and participates in the surface expression of VIM-2, Lewis X/SSEA-1 and sialyl Lewis X antigens. Preferentially transfers fucose to the GlcNAc of an internal N-acetyllactosamine unit of a poly-N-acetyllactosamine chain acceptor substrate. Also catalyzes to a lesser extend the transfer of L-fucose to the GlcNAc of a type 1 (beta-D-galactosyl-(1-&gt;3)-N-acetyl-beta-D-glucosaminyl) or H-type 1 (alpha-L-Fuc-(1-&gt;2)-beta-D-Gal-(1-&gt;3)-D-GlcNAc) chain oligosaccharide via an alpha (1,4) linkage. Preferentially catalyzes sialylated type 2 oligosaccharide acceptors over neutral type 2 or H type 2 (alpha-L-Fuc-(1-&gt;2)-beta-D-Gal-(1-&gt;4)-D-GlcNAc) oligosaccharide acceptors. Lactose-based structures are also acceptor substrates. This chain is 4-galactosyl-N-acetylglucosaminide 3-alpha-L-fucosyltransferase FUT5, found in Homo sapiens (Human).